Consider the following 128-residue polypeptide: uncharacterized protein (128 aa).

The 126-residue stretch at 2–127 (KLLQIRLLVN…DHNLIEIYKM (126 aa)) folds into the VOC domain. Ni(2+)-binding residues include E48 and E123.

Belongs to the glyoxalase I family.

This is an uncharacterized protein from Bacillus subtilis (strain 168).